We begin with the raw amino-acid sequence, 305 residues long: UDP-3-O-acyl-N-acetylglucosamine deacetylase (305 aa).

Histidine 79, histidine 238, and aspartate 242 together coordinate Zn(2+). The Proton donor role is filled by histidine 265.

This sequence belongs to the LpxC family. Zn(2+) serves as cofactor.

The enzyme catalyses a UDP-3-O-[(3R)-3-hydroxyacyl]-N-acetyl-alpha-D-glucosamine + H2O = a UDP-3-O-[(3R)-3-hydroxyacyl]-alpha-D-glucosamine + acetate. It participates in glycolipid biosynthesis; lipid IV(A) biosynthesis; lipid IV(A) from (3R)-3-hydroxytetradecanoyl-[acyl-carrier-protein] and UDP-N-acetyl-alpha-D-glucosamine: step 2/6. Its function is as follows. Catalyzes the hydrolysis of UDP-3-O-myristoyl-N-acetylglucosamine to form UDP-3-O-myristoylglucosamine and acetate, the committed step in lipid A biosynthesis. The polypeptide is UDP-3-O-acyl-N-acetylglucosamine deacetylase (Vibrio atlanticus (strain LGP32) (Vibrio splendidus (strain Mel32))).